The primary structure comprises 600 residues: Dihydroxy-acid dehydratase (600 aa).

Asp-82 contributes to the Mg(2+) binding site. Residue Cys-123 coordinates [2Fe-2S] cluster. The Mg(2+) site is built by Asp-124 and Lys-125. N6-carboxylysine is present on Lys-125. Cys-192 contributes to the [2Fe-2S] cluster binding site. Glu-489 is a Mg(2+) binding site. Ser-515 acts as the Proton acceptor in catalysis.

The protein belongs to the IlvD/Edd family. In terms of assembly, homodimer. It depends on [2Fe-2S] cluster as a cofactor. Requires Mg(2+) as cofactor.

The catalysed reaction is (2R)-2,3-dihydroxy-3-methylbutanoate = 3-methyl-2-oxobutanoate + H2O. The enzyme catalyses (2R,3R)-2,3-dihydroxy-3-methylpentanoate = (S)-3-methyl-2-oxopentanoate + H2O. The protein operates within amino-acid biosynthesis; L-isoleucine biosynthesis; L-isoleucine from 2-oxobutanoate: step 3/4. Its pathway is amino-acid biosynthesis; L-valine biosynthesis; L-valine from pyruvate: step 3/4. Functions in the biosynthesis of branched-chain amino acids. Catalyzes the dehydration of (2R,3R)-2,3-dihydroxy-3-methylpentanoate (2,3-dihydroxy-3-methylvalerate) into 2-oxo-3-methylpentanoate (2-oxo-3-methylvalerate) and of (2R)-2,3-dihydroxy-3-methylbutanoate (2,3-dihydroxyisovalerate) into 2-oxo-3-methylbutanoate (2-oxoisovalerate), the penultimate precursor to L-isoleucine and L-valine, respectively. This is Dihydroxy-acid dehydratase from Phocaeicola vulgatus (strain ATCC 8482 / DSM 1447 / JCM 5826 / CCUG 4940 / NBRC 14291 / NCTC 11154) (Bacteroides vulgatus).